Here is a 294-residue protein sequence, read N- to C-terminus: NAD kinase (294 aa).

D74 acts as the Proton acceptor in catalysis. Residues D74–G75, N148–E149, H159, R176, D178, T189–S194, and Q249 contribute to the NAD(+) site.

The protein belongs to the NAD kinase family. Requires a divalent metal cation as cofactor.

It localises to the cytoplasm. The catalysed reaction is NAD(+) + ATP = ADP + NADP(+) + H(+). Its function is as follows. Involved in the regulation of the intracellular balance of NAD and NADP, and is a key enzyme in the biosynthesis of NADP. Catalyzes specifically the phosphorylation on 2'-hydroxyl of the adenosine moiety of NAD to yield NADP. The polypeptide is NAD kinase (Vibrio atlanticus (strain LGP32) (Vibrio splendidus (strain Mel32))).